Here is a 154-residue protein sequence, read N- to C-terminus: MKITLLTVGKLGRMVEAQLAVDYASRATASGRALAVGPVEIVEVEARKPGKAAEAEVLRPHLEGAYVIACDEHGKVRPSRAFAEHVGRLRDDGHRRLVFLIGGADGLDPSILSTANETLAFGPQTWPHALARAMLAEQVYRAVTILAGSPYHRD.

Gly102 serves as a coordination point for S-adenosyl-L-methionine.

This sequence belongs to the RNA methyltransferase RlmH family. In terms of assembly, homodimer.

It localises to the cytoplasm. The enzyme catalyses pseudouridine(1915) in 23S rRNA + S-adenosyl-L-methionine = N(3)-methylpseudouridine(1915) in 23S rRNA + S-adenosyl-L-homocysteine + H(+). Functionally, specifically methylates the pseudouridine at position 1915 (m3Psi1915) in 23S rRNA. This chain is Ribosomal RNA large subunit methyltransferase H, found in Caulobacter sp. (strain K31).